Reading from the N-terminus, the 490-residue chain is UDP-N-acetylmuramate--L-alanine ligase (490 aa).

122-128 (GTHGKTS) contacts ATP.

It belongs to the MurCDEF family.

The protein localises to the cytoplasm. The enzyme catalyses UDP-N-acetyl-alpha-D-muramate + L-alanine + ATP = UDP-N-acetyl-alpha-D-muramoyl-L-alanine + ADP + phosphate + H(+). Its pathway is cell wall biogenesis; peptidoglycan biosynthesis. Cell wall formation. This is UDP-N-acetylmuramate--L-alanine ligase from Mycobacteroides abscessus (strain ATCC 19977 / DSM 44196 / CCUG 20993 / CIP 104536 / JCM 13569 / NCTC 13031 / TMC 1543 / L948) (Mycobacterium abscessus).